The following is a 190-amino-acid chain: Nucleoside triphosphate pyrophosphatase (190 aa).

The active-site Proton acceptor is the aspartate 69.

This sequence belongs to the Maf family. A divalent metal cation serves as cofactor.

Its subcellular location is the cytoplasm. The catalysed reaction is a ribonucleoside 5'-triphosphate + H2O = a ribonucleoside 5'-phosphate + diphosphate + H(+). It catalyses the reaction a 2'-deoxyribonucleoside 5'-triphosphate + H2O = a 2'-deoxyribonucleoside 5'-phosphate + diphosphate + H(+). In terms of biological role, nucleoside triphosphate pyrophosphatase. May have a dual role in cell division arrest and in preventing the incorporation of modified nucleotides into cellular nucleic acids. The sequence is that of Nucleoside triphosphate pyrophosphatase from Helicobacter pylori (strain ATCC 700392 / 26695) (Campylobacter pylori).